The chain runs to 91 residues: MNVLHFLILLMSVVSVFCINPEDIGCDDSITPEKFAENDAKCVQCKEQFEETNMLEQCREDCFKGKFFRSCVDHLSGAYDEKDDVEAPPPE.

Positions 1 to 18 (MNVLHFLILLMSVVSVFC) are cleaved as a signal peptide.

The protein belongs to the arthropod CHH/MIH/GIH/VIH hormone family. As to expression, expressed by the venom gland.

The protein resides in the secreted. Functionally, may increase the toxicity of alpha-latrotoxin and/or other venom components. Is non-toxic to mice and to the cockroach Periplaneta americana. This is Alpha-latrotoxin associated low molecular weight protein SGV150-311 from Steatoda grossa (False black widow).